We begin with the raw amino-acid sequence, 142 residues long: Large ribosomal subunit protein uL13 (142 aa).

Belongs to the universal ribosomal protein uL13 family. In terms of assembly, part of the 50S ribosomal subunit.

Functionally, this protein is one of the early assembly proteins of the 50S ribosomal subunit, although it is not seen to bind rRNA by itself. It is important during the early stages of 50S assembly. In Tolumonas auensis (strain DSM 9187 / NBRC 110442 / TA 4), this protein is Large ribosomal subunit protein uL13.